The chain runs to 142 residues: MLGLHVGTLMISLFLCILLEPVEGSLMQPCQPINQTVSLEKEGCPTCLVIQTPICSGHCFTKELVFKSPFSTVYQHVCTYRDVRYETICLPDCSPWVDPHVTYPVALSCDCSLCNMDTSDCTIESLQPDLCMTQRVLADGMW.

The signal sequence occupies residues 1–24 (MLGLHVGTLMISLFLCILLEPVEG). 6 disulfides stabilise this stretch: Cys-30-Cys-78, Cys-44-Cys-93, Cys-47-Cys-131, Cys-55-Cys-109, Cys-59-Cys-111, and Cys-114-Cys-121. N-linked (GlcNAc...) asparagine glycosylation is present at Asn-34.

This sequence belongs to the glycoprotein hormones subunit beta family. In terms of assembly, heterodimer of an alpha and a beta chain.

It is found in the secreted. Functionally, involved in gametogenesis and steroidogenesis. The protein is Gonadotropin subunit beta-2 (cgbb) of Coregonus autumnalis (Arctic cisco).